A 91-amino-acid chain; its full sequence is Acylphosphatase (91 aa).

Residues Arg-5–Gly-91 enclose the Acylphosphatase-like domain. Residues Arg-20 and Asn-38 contribute to the active site.

It belongs to the acylphosphatase family.

It carries out the reaction an acyl phosphate + H2O = a carboxylate + phosphate + H(+). This chain is Acylphosphatase (acyP), found in Thermococcus kodakarensis (strain ATCC BAA-918 / JCM 12380 / KOD1) (Pyrococcus kodakaraensis (strain KOD1)).